Reading from the N-terminus, the 185-residue chain is Ribosome-recycling factor (185 aa).

This sequence belongs to the RRF family.

The protein resides in the cytoplasm. Its function is as follows. Responsible for the release of ribosomes from messenger RNA at the termination of protein biosynthesis. May increase the efficiency of translation by recycling ribosomes from one round of translation to another. The chain is Ribosome-recycling factor from Francisella tularensis subsp. holarctica (strain FTNF002-00 / FTA).